Consider the following 54-residue polypeptide: UPF0391 membrane protein TERTU_3637 (54 aa).

The next 2 helical transmembrane spans lie at 4 to 24 and 29 to 49; these read WALVFLIFALVAGVLGFTGLA and SIAWILFVVGLIVSLIFLVAG.

Belongs to the UPF0391 family.

The protein resides in the cell membrane. This is UPF0391 membrane protein TERTU_3637 from Teredinibacter turnerae (strain ATCC 39867 / T7901).